Reading from the N-terminus, the 483-residue chain is 3-isopropylmalate dehydratase large subunit (483 aa).

[4Fe-4S] cluster is bound by residues Cys361, Cys424, and Cys427.

The protein belongs to the aconitase/IPM isomerase family. LeuC type 1 subfamily. Heterodimer of LeuC and LeuD. It depends on [4Fe-4S] cluster as a cofactor.

It catalyses the reaction (2R,3S)-3-isopropylmalate = (2S)-2-isopropylmalate. It functions in the pathway amino-acid biosynthesis; L-leucine biosynthesis; L-leucine from 3-methyl-2-oxobutanoate: step 2/4. Its function is as follows. Catalyzes the isomerization between 2-isopropylmalate and 3-isopropylmalate, via the formation of 2-isopropylmaleate. This chain is 3-isopropylmalate dehydratase large subunit, found in Polaromonas naphthalenivorans (strain CJ2).